The primary structure comprises 72 residues: Translation initiation factor IF-1 2 (72 aa).

The region spanning 1 to 72 (MAKEELIEFE…TKGRINYRHK (72 aa)) is the S1-like domain.

The protein belongs to the IF-1 family. In terms of assembly, component of the 30S ribosomal translation pre-initiation complex which assembles on the 30S ribosome in the order IF-2 and IF-3, IF-1 and N-formylmethionyl-tRNA(fMet); mRNA recruitment can occur at any time during PIC assembly.

The protein localises to the cytoplasm. In terms of biological role, one of the essential components for the initiation of protein synthesis. Stabilizes the binding of IF-2 and IF-3 on the 30S subunit to which N-formylmethionyl-tRNA(fMet) subsequently binds. Helps modulate mRNA selection, yielding the 30S pre-initiation complex (PIC). Upon addition of the 50S ribosomal subunit IF-1, IF-2 and IF-3 are released leaving the mature 70S translation initiation complex. The polypeptide is Translation initiation factor IF-1 2 (Ralstonia nicotianae (strain ATCC BAA-1114 / GMI1000) (Ralstonia solanacearum)).